We begin with the raw amino-acid sequence, 291 residues long: Succinate--CoA ligase [ADP-forming] subunit alpha 1 (291 aa).

Residues 20–23 (TGFQ), Lys46, and 99–101 (VTE) contribute to the CoA site. A substrate-binding site is contributed by Tyr162. Residue His249 is the Tele-phosphohistidine intermediate of the active site.

Belongs to the succinate/malate CoA ligase alpha subunit family. In terms of assembly, heterotetramer of two alpha and two beta subunits.

It carries out the reaction succinate + ATP + CoA = succinyl-CoA + ADP + phosphate. The enzyme catalyses GTP + succinate + CoA = succinyl-CoA + GDP + phosphate. The protein operates within carbohydrate metabolism; tricarboxylic acid cycle; succinate from succinyl-CoA (ligase route): step 1/1. Functionally, succinyl-CoA synthetase functions in the citric acid cycle (TCA), coupling the hydrolysis of succinyl-CoA to the synthesis of either ATP or GTP and thus represents the only step of substrate-level phosphorylation in the TCA. The alpha subunit of the enzyme binds the substrates coenzyme A and phosphate, while succinate binding and nucleotide specificity is provided by the beta subunit. This Archaeoglobus fulgidus (strain ATCC 49558 / DSM 4304 / JCM 9628 / NBRC 100126 / VC-16) protein is Succinate--CoA ligase [ADP-forming] subunit alpha 1.